We begin with the raw amino-acid sequence, 311 residues long: Ketoisovalerate oxidoreductase subunit VorB (311 aa).

As to quaternary structure, heterotetramer of one alpha, one beta, one delta and one gamma chain.

The catalysed reaction is 3-methyl-2-oxobutanoate + 2 oxidized [2Fe-2S]-[ferredoxin] + CoA = 2-methylpropanoyl-CoA + 2 reduced [2Fe-2S]-[ferredoxin] + CO2 + H(+). The chain is Ketoisovalerate oxidoreductase subunit VorB (vorB) from Pyrococcus furiosus (strain ATCC 43587 / DSM 3638 / JCM 8422 / Vc1).